Reading from the N-terminus, the 432-residue chain is Isocitrate lyase (432 aa).

The tract at residues 1–24 is disordered; the sequence is MSNVGKPRTAQEIQQDWDTNPRWN. Over residues 11–22 the composition is skewed to polar residues; the sequence is QEIQQDWDTNPR. Residue 93–95 coordinates substrate; sequence SGW. Aspartate 155 contacts Mg(2+). The active-site Proton acceptor is the cysteine 193. Residues 194–195, arginine 230, 315–319, and threonine 349 contribute to the substrate site; these read GH and NCSPS.

This sequence belongs to the isocitrate lyase/PEP mutase superfamily. Isocitrate lyase family. As to quaternary structure, homotetramer. Mg(2+) is required as a cofactor.

It catalyses the reaction D-threo-isocitrate = glyoxylate + succinate. It participates in carbohydrate metabolism; glyoxylate cycle; (S)-malate from isocitrate: step 1/2. Its activity is regulated as follows. Inhibited by 3-phosphoglycerate, 6-phosphogluconate, phosphoenolpyruvate (PEP), fructose 1,6-bisphosphate, glycolate, oxalate, and itaconate. Functionally, involved in the metabolic adaptation in response to environmental changes. Catalyzes the reversible formation of succinate and glyoxylate from isocitrate, a key step of the glyoxylate cycle, which operates as an anaplerotic route for replenishing the tricarboxylic acid cycle during growth on fatty acid substrates. This is Isocitrate lyase from Corynebacterium glutamicum (strain ATCC 13032 / DSM 20300 / JCM 1318 / BCRC 11384 / CCUG 27702 / LMG 3730 / NBRC 12168 / NCIMB 10025 / NRRL B-2784 / 534).